The sequence spans 600 residues: MRLSQMLFVTLREDPAEAEIPSHKLLLRAGYIRRVGSGIYAYLPLMWRVLQKVSQIVREEMDAAGAQECLLPQIQPAELWQESGRWDTYTQAEGIMFALQDRQDRELGLGPTHEEVITAVARDMIRSYRQLPLNLYQIQTKFRDEIRPRFGLMRGREFIMKDAYSFSTDEADLKIIYSKMHDAYCNILQRSGLAYRAVDADSGAIGGSGSQEFMVLAEAGEDEVLYTDDGKYAANVEKAVSRPADAQPSSFKSVEKKETPKTDTIAKLCDCLQCSPTQVVKTVLYEAVYDNGQTLLALVSLRGDQSVNEVKLQNELVQLGDVVKGKALIALTVAEGGTKWASQPLPLGYIAPDLADSYIQKSKQVHGKFVRLVDQTAVDLKNFVTGANEVGIHQVGVNWKTDIPLPKHVVDIRTAQVGDRAVHDPKQTLQTARGIEIGHIFQLGTKYSQALGATYTNEAGKEQPLVMGCYGVGVSRLAQAAVEQSYDKDGIVWPVAIAPYHAIIIIPNGKDSDQVEAAEKLYSELNAAGIETLLDDRTERAGVKFKDADLIGIPYRIVTGRSLKEGNVEMVERATHDAHQIALDQVLPTLKEYLAKAIST.

Belongs to the class-II aminoacyl-tRNA synthetase family. ProS type 1 subfamily. Homodimer.

The protein localises to the cytoplasm. It catalyses the reaction tRNA(Pro) + L-proline + ATP = L-prolyl-tRNA(Pro) + AMP + diphosphate. Catalyzes the attachment of proline to tRNA(Pro) in a two-step reaction: proline is first activated by ATP to form Pro-AMP and then transferred to the acceptor end of tRNA(Pro). As ProRS can inadvertently accommodate and process non-cognate amino acids such as alanine and cysteine, to avoid such errors it has two additional distinct editing activities against alanine. One activity is designated as 'pretransfer' editing and involves the tRNA(Pro)-independent hydrolysis of activated Ala-AMP. The other activity is designated 'posttransfer' editing and involves deacylation of mischarged Ala-tRNA(Pro). The misacylated Cys-tRNA(Pro) is not edited by ProRS. The protein is Proline--tRNA ligase of Acaryochloris marina (strain MBIC 11017).